Here is a 411-residue protein sequence, read N- to C-terminus: Cytochrome P450 monooxygenase sirE (411 aa).

Residues Asn12 and Asn149 are each glycosylated (N-linked (GlcNAc...) asparagine). A helical membrane pass occupies residues 181–203; the sequence is FLNVISIFTVMMASLNVLYDILA. Asn342 carries an N-linked (GlcNAc...) asparagine glycan. Heme is bound at residue Cys352.

Belongs to the cytochrome P450 family. Heme is required as a cofactor.

The protein localises to the membrane. It functions in the pathway mycotoxin biosynthesis. Cytochrome P450 monooxygenase; part of the gene cluster that mediates the biosynthesis of sirodesmin PL, an epipolythiodioxopiperazine (ETP) characterized by a disulfide bridged cyclic dipeptide and that acts as a phytotoxin which is involved in the blackleg didease of canola. SirD catalyzes the O-prenylation of L-tyrosine (L-Tyr) in the presence of dimethylallyl diphosphate (DMAPP) to yield 4-O-dimethylallyl-L-Tyr, and therefore represents probably the first pathway-specific enzyme in the biosynthesis of sirodesmin PL. 4-O-dimethylallyl-L-Tyr, then undergoes condensation with L-Ser in a reaction catalyzed by the non-ribosomal peptide synthase sirP to form the diketopiperazine (DKP) backbone. Further bishydroxylation of the DKP performed by the cytochrome P450 monooxygenase sirC leads to the production of the intermediate phomamide. This step is essential to form the reactive thiol group required for toxicity of sirodesmin PL. The next steps of sirodesmin biosynthesis are not well understood yet, but some predictions could be made from intermediate compounds identification. Phomamide is converted into phomalizarine via oxidation, probably by sirT. Further oxidation, methylation (by sirM or sirN) and reduction steps convert phomalizarine to deacetyl sirodesmin. Finally, acetyltransferase sirH probably acetylates deacetyl sirodesmin to produce sirodesmin PL. The protein is Cytochrome P450 monooxygenase sirE of Leptosphaeria maculans (Blackleg fungus).